The chain runs to 901 residues: Protein translocase subunit SecA (901 aa).

ATP is bound by residues Q87, 105–109 (GEGKT), and D512. Residues 852–901 (AQMQQLSHQSDDEAAAQDLAAQTGERKVGRNDPCPCGSGKKYKQCHGRLS) are disordered. Zn(2+)-binding residues include C885, C887, C896, and H897. Residues 891 to 901 (KKYKQCHGRLS) show a composition bias toward basic residues.

It belongs to the SecA family. In terms of assembly, monomer and homodimer. Part of the essential Sec protein translocation apparatus which comprises SecA, SecYEG and auxiliary proteins SecDF-YajC and YidC. It depends on Zn(2+) as a cofactor.

Its subcellular location is the cell inner membrane. The protein resides in the cytoplasm. The catalysed reaction is ATP + H2O + cellular proteinSide 1 = ADP + phosphate + cellular proteinSide 2.. Its function is as follows. Part of the Sec protein translocase complex. Interacts with the SecYEG preprotein conducting channel. Has a central role in coupling the hydrolysis of ATP to the transfer of proteins into and across the cell membrane, serving both as a receptor for the preprotein-SecB complex and as an ATP-driven molecular motor driving the stepwise translocation of polypeptide chains across the membrane. This Klebsiella pneumoniae subsp. pneumoniae (strain ATCC 700721 / MGH 78578) protein is Protein translocase subunit SecA.